Here is a 178-residue protein sequence, read N- to C-terminus: Oligoribonuclease (178 aa).

One can recognise an Exonuclease domain in the interval 7–168 (LIWIDLEMTG…DDIRESIAEL (162 aa)). Y128 is a catalytic residue.

The protein belongs to the oligoribonuclease family.

It localises to the cytoplasm. Functionally, 3'-to-5' exoribonuclease specific for small oligoribonucleotides. This is Oligoribonuclease from Francisella tularensis subsp. novicida (strain U112).